The primary structure comprises 697 residues: Elongation factor G 2 (697 aa).

The 276-residue stretch at serine 5 to asparagine 280 folds into the tr-type G domain. GTP contacts are provided by residues alanine 14–threonine 21, aspartate 78–histidine 82, and asparagine 132–aspartate 135.

Belongs to the TRAFAC class translation factor GTPase superfamily. Classic translation factor GTPase family. EF-G/EF-2 subfamily.

Its subcellular location is the cytoplasm. In terms of biological role, catalyzes the GTP-dependent ribosomal translocation step during translation elongation. During this step, the ribosome changes from the pre-translocational (PRE) to the post-translocational (POST) state as the newly formed A-site-bound peptidyl-tRNA and P-site-bound deacylated tRNA move to the P and E sites, respectively. Catalyzes the coordinated movement of the two tRNA molecules, the mRNA and conformational changes in the ribosome. This Shewanella sp. (strain MR-4) protein is Elongation factor G 2.